We begin with the raw amino-acid sequence, 279 residues long: Movement protein (279 aa).

Residues serine 255 to leucine 279 form a disordered region. Positions proline 263–leucine 279 are enriched in polar residues.

It belongs to the cucumovirus movement protein family.

The protein resides in the host cell junction. It is found in the host plasmodesma. In terms of biological role, transports viral genome to neighboring plant cells directly through plasmosdesmata, without any budding. The movement protein allows efficient cell to cell propagation, by bypassing the host cell wall barrier. Acts by forming a tubular structure at the host plasmodesmata, enlarging it enough to allow free passage of virion capsids. The sequence is that of Movement protein from Cucumis sativus (Cucumber).